A 1304-amino-acid chain; its full sequence is Splicing factor 3B subunit 1 (1304 aa).

Disordered regions lie at residues 100–119 (QYDP…EDEY) and 124–148 (RTMI…PKMN). Basic and acidic residues predominate over residues 104–119 (FAEHRPPKIADREDEY). Phosphothreonine is present on T125. Position 129 is a phosphoserine (S129). N6-acetyllysine is present on K141. Residue T142 is modified to Phosphothreonine. A Citrulline modification is found at R157. Residues 173–360 (AEKAKAGELK…PVLTPGKTPI (188 aa)) form a disordered region. The tract at residues 190-342 (SQPPSKRKRR…KRKSRWDETP (153 aa)) is U2AF homology region; mediates interaction with RBM39. A Phosphoserine modification is found at S194. T203, T207, and T211 each carry phosphothreonine. K214 is subject to N6-acetyllysine; alternate. K214 is covalently cross-linked (Glycyl lysine isopeptide (Lys-Gly) (interchain with G-Cter in SUMO2); alternate). A phosphothreonine mark is found at T223 and T227. Positions 223-491 (TPGHTPSLRW…VDESTLSPEE (269 aa)) are interaction with PPP1R8. S229 bears the Phosphoserine mark. Positions 231 to 241 (RWDETPGRAKG) are enriched in basic and acidic residues. T235, T244, T248, T257, T261, T267, T273, and T278 each carry phosphothreonine. At S287 the chain carries Phosphoserine. The span at 291–304 (NRWDETPKTERDTP) shows a compositional bias: basic and acidic residues. A phosphothreonine mark is found at T296, T299, T303, and T313. At S322 the chain carries Phosphoserine. T326 and T328 each carry phosphothreonine. S332 bears the Phosphoserine mark. A Phosphothreonine modification is found at T341. Over residues 342 to 352 (PASQMGGSTPV) the composition is skewed to polar residues. Phosphoserine is present on residues S344 and S349. Phosphothreonine is present on residues T350 and T354. At S400 the chain carries Phosphoserine. Residue K413 forms a Glycyl lysine isopeptide (Lys-Gly) (interchain with G-Cter in SUMO2); alternate linkage. K413 participates in a covalent cross-link: Glycyl lysine isopeptide (Lys-Gly) (interchain with G-Cter in SUMO1); alternate. Phosphothreonine is present on T426. K430 is covalently cross-linked (Glycyl lysine isopeptide (Lys-Gly) (interchain with G-Cter in SUMO2)). T434 bears the Phosphothreonine; by DYRK1A mark. A Phosphothreonine modification is found at T436. S488 carries the phosphoserine modification. HEAT repeat units lie at residues 529 to 568 (GPLF…DLVR), 569 to 603 (PYVH…LAKA), 604 to 641 (AGLA…ALGI), 643 to 677 (SLLP…LMGC), 680 to 718 (LPHL…AATP), 763 to 801 (NYYT…TDGV), 843 to 881 (KVGA…NLGA), 1010 to 1048 (TPPI…RGAE), 1052 to 1090 (AREW…AIGP), 1122 to 1160 (TCSP…YIGE), and 1163 to 1201 (KDYI…GVYG). Residues 529–568 (GPLFNQILPLLMSPTLEDQERHLLVKVIDRILYKLDDLVR) are interaction with SF3B14. The segment at 547–550 (QERH) is interaction with PHF5A. N6-acetyllysine is present on residues K554 and K562. An interaction with PHF5A region spans residues 1156 to 1157 (EY). Residues 1248–1304 (QYCLQGLFHPARKVRDVYWKIYNSIYIGSQDALIAHYPRIYNDDKNTYIRYELDYIL) are interaction with SF3B3 and SF3B5.

Belongs to the SF3B1 family. In terms of assembly, component of the 17S U2 SnRNP complex, a ribonucleoprotein complex that contains small nuclear RNA (snRNA) U2 and a number of specific proteins. Part of the SF3B subcomplex of the 17S U2 SnRNP complex. SF3B associates with the splicing subcomplex SF3A and a 12S RNA unit to form the U2 small nuclear ribonucleoproteins complex (U2 snRNP). Within the SF3B complex, interacts directly (via HEAT domain) with SF3B3, SF3B5, SF3B6 and (via HEAT domain) with PHF5A. The SF3B subcomplex interacts with U2AF2. Identified in the spliceosome C complex. Component of the minor (U12-type spliceosome) spliceosome. Within the minor spliceosome complex, interacts with SCNM1 and CRIPT. Component of the B-WICH complex, at least composed of SMARCA5/SNF2H, BAZ1B/WSTF, SF3B1, DEK, MYO1C, ERCC6, MYBBP1A and DDX21. Phosphorylated form interacts with PPP1R8. Interacts with PQBP1. Interacts with RBM17. Interacts with RBM39. Interacts with SETX. Interacts with RBM15. Interacts with USH1G. Interacts with SDE2. Interacts with U2AF1. Interacts with CACTIN. Interacts with ZRSR1. Interacts with CYREN. In terms of processing, phosphorylated. Phosphorylation occurs concomitantly with the splicing catalytic steps. Phosphorylation on Thr-244, Thr-248 and Thr-313 by cyclin-dependent kinases promotes interaction with PPP1R8 during mitosis. Citrullinated by PADI4.

The protein localises to the nucleus. It localises to the nucleus speckle. Functionally, component of the 17S U2 SnRNP complex of the spliceosome, a large ribonucleoprotein complex that removes introns from transcribed pre-mRNAs. The 17S U2 SnRNP complex (1) directly participates in early spliceosome assembly and (2) mediates recognition of the intron branch site during pre-mRNA splicing by promoting the selection of the pre-mRNA branch-site adenosine, the nucleophile for the first step of splicing. Within the 17S U2 SnRNP complex, SF3B1 is part of the SF3B subcomplex, which is required for 'A' complex assembly formed by the stable binding of U2 snRNP to the branchpoint sequence in pre-mRNA. Sequence independent binding of SF3A and SF3B subcomplexes upstream of the branch site is essential, it may anchor U2 snRNP to the pre-mRNA. May also be involved in the assembly of the 'E' complex. Also acts as a component of the minor spliceosome, which is involved in the splicing of U12-type introns in pre-mRNAs. Together with other U2 snRNP complex components may also play a role in the selective processing of microRNAs (miRNAs) from the long primary miRNA transcript, pri-miR-17-92. The protein is Splicing factor 3B subunit 1 of Homo sapiens (Human).